The following is a 452-amino-acid chain: Deoxybrevianamide E synthase notF (452 aa).

Basic and acidic residues predominate over residues 1 to 19 (MTAPELRVDTFRAPEDAPK). Residues 1 to 38 (MTAPELRVDTFRAPEDAPKEPSAQQPRLPSSPSPAQAL) are disordered. Over residues 21–38 (PSAQQPRLPSSPSPAQAL) the composition is skewed to low complexity. A brevianamide F-binding site is contributed by Glu-108. Dimethylallyl diphosphate is bound by residues Arg-122, Lys-212, Tyr-214, Lys-282, Tyr-284, Tyr-371, Tyr-436, and Tyr-440.

This sequence belongs to the tryptophan dimethylallyltransferase family. Monomer.

The enzyme catalyses brevianamide F + dimethylallyl diphosphate = deoxybrevianamide E + diphosphate. It participates in alkaloid biosynthesis. With respect to regulation, addition of 5 mM Mg(2+), Ca(2+) or Mn(2+) slightly enhances catalysis (about 100-120%). Significant reduction of enzyme activity (2%-35%) is observed with Cu(2+), Zn(2+), Fe(2+), or Sn(2+) (5 mM). Deoxybrevianamide E synthase; part of the gene cluster that mediates the biosynthesis of notoamide, a fungal indole alkaloid that belongs to a family of natural products containing a characteristic bicyclo[2.2.2]diazaoctane core. The first step of notoamide biosynthesis involves coupling of L-proline and L-tryptophan by the bimodular NRPS notE, to produce cyclo-L-tryptophan-L-proline called brevianamide F. The reverse prenyltransferase notF then acts as a deoxybrevianamide E synthase and converts brevianamide F to deoxybrevianamide E via reverse prenylation at C-2 of the indole ring leading to the bicyclo[2.2.2]diazaoctane core. Deoxybrevianamide E is further hydroxylated at C-6 of the indole ring, likely catalyzed by the cytochrome P450 monooxygenase notG, to yield 6-hydroxy-deoxybrevianamide E. 6-hydroxy-deoxybrevianamide E is a specific substrate of the prenyltransferase notC for normal prenylation at C-7 to produce 6-hydroxy-7-prenyl-deoxybrevianamide, also called notoamide S. As the proposed pivotal branching point in notoamide biosynthesis, notoamide S can be diverted to notoamide E through an oxidative pyran ring closure putatively catalyzed by either notH cytochrome P450 monooxygenase or the notD FAD-linked oxidoreductase. This step would be followed by an indole 2,3-epoxidation-initiated pinacol-like rearrangement catalyzed by the notB FAD-dependent monooxygenase leading to the formation of notoamide C and notoamide D. On the other hand notoamide S is converted to notoamide T by notH (or notD), a bifunctional oxidase that also functions as the intramolecular Diels-Alderase responsible for generation of (+)-notoamide T. To generate antipodal (-)-notoaminide T, notH' (or notD') in Aspergillus versicolor is expected to catalyze a Diels-Alder reaction leading to the opposite stereochemistry. The remaining oxidoreductase notD (or notH) likely catalyzes the oxidative pyran ring formation to yield (+)-stephacidin A. The FAD-dependent monooxygenase notI is highly similar to notB and is predicted to catalyze a similar conversion from (+)-stephacidin A to (-)-notoamide B via the 2,3-epoxidation of (+)-stephacidin A followed by a pinacol-type rearrangement. Finally, it remains unclear which enzyme could be responsible for the final hydroxylation steps leading to notoamide A and sclerotiamide. In Aspergillus sp. (strain MF297-2), this protein is Deoxybrevianamide E synthase notF.